Consider the following 704-residue polypeptide: Phosphate acetyltransferase (704 aa).

The interval 379–704 (AFRYQVVQRA…AIQADAQAPA (326 aa)) is phosphate acetyltransferase.

This sequence in the N-terminal section; belongs to the CobB/CobQ family. The protein in the C-terminal section; belongs to the phosphate acetyltransferase and butyryltransferase family. Homohexamer.

Its subcellular location is the cytoplasm. The catalysed reaction is acetyl-CoA + phosphate = acetyl phosphate + CoA. Its pathway is metabolic intermediate biosynthesis; acetyl-CoA biosynthesis; acetyl-CoA from acetate: step 2/2. With respect to regulation, activity is increased under anaerobic growth conditions. Involved in acetate metabolism. In combination with LdhA and AckA, allows fermentation of pyruvate, enhancing long-term survival under anaerobic conditions. The chain is Phosphate acetyltransferase (pta) from Pseudomonas aeruginosa (strain ATCC 15692 / DSM 22644 / CIP 104116 / JCM 14847 / LMG 12228 / 1C / PRS 101 / PAO1).